Here is a 137-residue protein sequence, read N- to C-terminus: Large ribosomal subunit protein uL16 (137 aa).

This sequence belongs to the universal ribosomal protein uL16 family. As to quaternary structure, part of the 50S ribosomal subunit.

Functionally, binds 23S rRNA and is also seen to make contacts with the A and possibly P site tRNAs. This chain is Large ribosomal subunit protein uL16, found in Rhizobium meliloti (strain 1021) (Ensifer meliloti).